A 492-amino-acid polypeptide reads, in one-letter code: 56 kDa U1 small nuclear ribonucleoprotein component (492 aa).

The span at 1-15 (MRPRRRGLAYHHTKP) shows a compositional bias: basic residues. 2 disordered regions span residues 1 to 35 (MRPR…QRRK) and 300 to 371 (DQFP…NKPG). Over residues 18 to 30 (QLSQGHYPTTSND) the composition is skewed to polar residues. Low complexity predominate over residues 310–321 (SNSPSSNSISSS). The span at 329-353 (TSYQTQPQRHAVNKPSNVLNSSNRH) shows a compositional bias: polar residues.

Component of the 18S U1 snRNP particle, a subcomplex of the spliceosome. Interacts with the nuclear cap-binding complex CBC1-CBC2 (yCBC). Directly contacts intronic sequences of substrate pre-RNA.

Its subcellular location is the nucleus. Component of the U1 snRNP particle, which recognizes and binds the 5'-splice site of pre-mRNA. Together with other non-snRNP factors, U1 snRNP forms the spliceosomal commitment complex, that targets pre-mRNA to the splicing pathway. In Saccharomyces cerevisiae (strain ATCC 204508 / S288c) (Baker's yeast), this protein is 56 kDa U1 small nuclear ribonucleoprotein component (SNU56).